The sequence spans 773 residues: Subtilisin-like protease SBT3.4 (773 aa).

The first 23 residues, 1-23 (MRNFRSSVLVVLSLIIVLNVARA), serve as a signal peptide directing secretion. A propeptide spans 24–108 (SAKSKVHIVY…VIPDSYYELA (85 aa)) (activation peptide). The region spanning 29-108 (VHIVYLGEKQ…VIPDSYYELA (80 aa)) is the Inhibitor I9 domain. In terms of domain architecture, Peptidase S8 spans 112–620 (IWDYLGPSAD…GGLVNPEKAA (509 aa)). D142 functions as the Charge relay system in the catalytic mechanism. N200 carries an N-linked (GlcNAc...) asparagine glycan. The Charge relay system role is filled by H216. N-linked (GlcNAc...) asparagine glycans are attached at residues N231, N408, and N536. Positions 382 to 474 (SLVYPEDPGN…IDNELGTDIL (93 aa)) constitute a PA domain. Residue S551 is the Charge relay system of the active site. N-linked (GlcNAc...) asparagine glycosylation is present at N643.

It belongs to the peptidase S8 family.

Its subcellular location is the secreted. The polypeptide is Subtilisin-like protease SBT3.4 (Arabidopsis thaliana (Mouse-ear cress)).